A 182-amino-acid polypeptide reads, in one-letter code: Methionine-R-sulfoxide reductase B2, mitochondrial (182 aa).

The transit peptide at 1–20 directs the protein to the mitochondrion; the sequence is MARLLWLLRGLTLGTAPRRA. In terms of domain architecture, MsrB spans 51–180; that stretch reads KSEWQKKLTP…NSVALKFKPR (130 aa). Zn(2+)-binding residues include Cys90, Cys93, Cys146, and Cys149. Cys169 serves as the catalytic Nucleophile.

Belongs to the MsrB Met sulfoxide reductase family. As to quaternary structure, interacts with DAOA; the interaction is direct. The cofactor is Zn(2+). As to expression, ubiquitous. Detected in retina, ocular ciliary body, skeletal muscle, heart, colon, bone marrow, cerebellum, small intestine, fetal brain, fetal liver, kidney, spinal cord, lung, placenta and prostate.

It is found in the mitochondrion. It catalyses the reaction L-methionyl-[protein] + [thioredoxin]-disulfide + H2O = L-methionyl-(R)-S-oxide-[protein] + [thioredoxin]-dithiol. It carries out the reaction [thioredoxin]-disulfide + L-methionine + H2O = L-methionine (R)-S-oxide + [thioredoxin]-dithiol. Methionine-sulfoxide reductase that specifically reduces methionine (R)-sulfoxide back to methionine. While in many cases, methionine oxidation is the result of random oxidation following oxidative stress, methionine oxidation is also a post-translational modification that takes place on specific residue. Upon oxidative stress, may play a role in the preservation of mitochondrial integrity by decreasing the intracellular reactive oxygen species build-up through its scavenging role, hence contributing to cell survival and protein maintenance. This Homo sapiens (Human) protein is Methionine-R-sulfoxide reductase B2, mitochondrial (MSRB2).